Consider the following 261-residue polypeptide: Small ribosomal subunit protein eS1 (261 aa).

A compositionally biased stretch (basic residues) spans 1 to 18; it reads MAVGKNKRISKGKKGGKK. The segment at 1-22 is disordered; it reads MAVGKNKRISKGKKGGKKKAAD.

The protein belongs to the eukaryotic ribosomal protein eS1 family. As to quaternary structure, component of the small ribosomal subunit. Mature ribosomes consist of a small (40S) and a large (60S) subunit. The 40S subunit contains about 33 different proteins and 1 molecule of RNA (18S). The 60S subunit contains about 49 different proteins and 3 molecules of RNA (25S, 5.8S and 5S).

It is found in the cytoplasm. This Cicer arietinum (Chickpea) protein is Small ribosomal subunit protein eS1.